A 131-amino-acid polypeptide reads, in one-letter code: MHNTLLEKIIAYLSLPGFHSLNNPPLSEAFNLYVHTAPLAATSLFIFTHKELELKPKSSPLRALKILTPFTILYISMIYCFLLTDTELTLSSKTFVLIVKKRSVFVFFLYNTIYWDIYIHIFVLLVPYRNI.

2 helical membrane-spanning segments follow: residues 66-84 (ILTP…FLLT) and 104-124 (VFVF…IFVL).

It localises to the cell membrane. The chain is Colicin-N immunity protein (cni) from Escherichia coli.